Here is a 322-residue protein sequence, read N- to C-terminus: Probable heme-iron transport system permease protein IsdF (322 aa).

9 helical membrane passes run 9–29, 61–81, 89–109, 114–134, 143–163, 179–199, 233–253, 267–287, and 294–314; these read LLFL…FVTG, ILIA…LQAA, ANII…MLFI, FYLP…IIVL, VSMI…LEIL, IWSD…LTLL, VFLA…GIIV, VLIP…DLLG, and LEIP…IYLI.

This sequence belongs to the binding-protein-dependent transport system permease family. FecCD subfamily.

It is found in the cell membrane. Functionally, part of the binding-protein-dependent transport system for heme-iron. Responsible for the translocation of the substrate across the membrane. This chain is Probable heme-iron transport system permease protein IsdF (isdF), found in Staphylococcus aureus (strain bovine RF122 / ET3-1).